The chain runs to 339 residues: Serpentine receptor class alpha-20 (339 aa).

6 consecutive transmembrane segments (helical) span residues 30–50 (VSFVFLATVILLSYYFAVLAI), 113–132 (LYFYYLTNYFSTYSVFSLTF), 151–171 (VSISLLIIQLVFTLGTYYFGL), 199–219 (FRTTIMVFCIIVTIFIYYLNV), 249–269 (CILIVLQFVCISVSSFGVNYI), and 284–304 (IAPFVVGVTYANLCLPLVIYF).

It belongs to the nematode receptor-like protein sra family.

The protein localises to the membrane. This is Serpentine receptor class alpha-20 (sra-20) from Caenorhabditis elegans.